A 782-amino-acid chain; its full sequence is General transcription and DNA repair factor IIH helicase/translocase subunit XPB (782 aa).

Positions 1–11 (MGKRDRVDRDK) are enriched in basic and acidic residues. Residues 1 to 52 (MGKRDRVDRDKKKSKKRQYEEEEEDEDDAPGNESQEAVPSAAGKQVDESSTK) are disordered. The Nuclear localization signal motif lies at 6–18 (RVDRDKKKSKKRQ). Positions 20 to 30 (EEEEEDEDDAP) are enriched in acidic residues. S34 is modified (phosphoserine). Residues 328–489 (FGNGRARSGV…LNFLIGPKLY (162 aa)) enclose the Helicase ATP-binding domain. 341–348 (PCGAGKSL) lines the ATP pocket. The short motif at 442–445 (EVHT) is the DEVH box element. Residues 543–703 (ACQFLIKFHE…AGMEEEELAF (161 aa)) enclose the Helicase C-terminal domain. S686 is subject to Phosphoserine. S751 carries the phosphoserine; by CK2 modification.

The protein belongs to the helicase family. RAD25/XPB subfamily. In terms of assembly, component of the 7-subunit TFIIH core complex composed of XPB/ERCC3, XPD/ERCC2, GTF2H1, GTF2H2, GTF2H3, GTF2H4 and GTF2H5, which is active in NER. The core complex associates with the 3-subunit CDK-activating kinase (CAK) module composed of CCNH/cyclin H, CDK7 and MNAT1 to form the 10-subunit holoenzyme (holo-TFIIH) active in transcription. Interacts with PUF60. Interacts with ATF7IP. Interacts with KAT2A; leading to KAT2A recruitment to promoters and acetylation of histones. Part of TBP-based Pol II pre-initiation complex (PIC), in which Pol II core assembles with general transcription factors and other specific initiation factors including GTF2E1, GTF2E2, GTF2F1, GTF2F2, TCEA1, ERCC2, ERCC3, GTF2H2, GTF2H3, GTF2H4, GTF2H5, GTF2A1, GTF2A2, GTF2B and TBP; this large multi-subunit PIC complex mediates DNA unwinding and targets Pol II core to the transcription start site where the first phosphodiester bond forms. Phosphorylation on Ser-751 by CK2 controls the 5'-excision activity of ERCC1-XPF endonuclease; phosphorylated protein inhibits the excision activity and thus NER. Dephosphorylation reactivates the 5'-excision step. Phosphorylation has no effect on transcription or the 3'-5' helicase activity.

The protein resides in the nucleus. It catalyses the reaction Couples ATP hydrolysis with the unwinding of duplex DNA by translocating in the 3'-5' direction.. The catalysed reaction is ATP + H2O = ADP + phosphate + H(+). Its activity is regulated as follows. Phosphorylation on Ser-751 by CK2 controls the 5'-excision activity of ERCC1-XPF endonuclease; phosphorylated protein inhibits the excision activity and thus NER. ATPase activity is stimulated by TFIIH subunit p52 (GTF2H4). DNA translocase activity by this subunit in TFIIH is stimulated by XPA, ERCC5/XPG and XFP plus ERCC1. Its function is as follows. ATP-dependent 3'-5' DNA helicase/translocase; binds dsDNA rather than ssDNA, unzipping it in a translocase rather than classical helicase activity. Component of the general transcription and DNA repair factor IIH (TFIIH) core complex. When complexed to CDK-activating kinase (CAK), involved in RNA transcription by RNA polymerase II. The ATPase activity of XPB/ERCC3, but not its helicase activity, is required for DNA opening; it may wrap around the damaged DNA wedging it open, causing localized melting and twisting that allows XPD/ERCC2 helicase to anchor. The ATP-dependent helicase activity of XPB/ERCC3 may be required for promoter escape. Also involved in transcription-coupled nucleotide excision repair (NER) of damaged DNA. In NER, TFIIH acts by opening DNA around the lesion to allow the excision of the damaged oligonucleotide and its replacement by a new DNA fragment. The structure of the TFIIH transcription complex differs from the NER-TFIIH complex; large movements by XPD/ERCC2 and XPB/ERCC3 are stabilized by XPA. The chain is General transcription and DNA repair factor IIH helicase/translocase subunit XPB (Ercc3) from Rattus norvegicus (Rat).